Consider the following 428-residue polypeptide: Glucose-1-phosphate adenylyltransferase (428 aa).

Alpha-D-glucose 1-phosphate is bound by residues Tyr-114, Gly-179, 194–195 (EK), and Ser-212.

It belongs to the bacterial/plant glucose-1-phosphate adenylyltransferase family. As to quaternary structure, homotetramer.

It catalyses the reaction alpha-D-glucose 1-phosphate + ATP + H(+) = ADP-alpha-D-glucose + diphosphate. The protein operates within glycan biosynthesis; glycogen biosynthesis. Involved in the biosynthesis of ADP-glucose, a building block required for the elongation reactions to produce glycogen. Catalyzes the reaction between ATP and alpha-D-glucose 1-phosphate (G1P) to produce pyrophosphate and ADP-Glc. This chain is Glucose-1-phosphate adenylyltransferase, found in Yersinia pseudotuberculosis serotype IB (strain PB1/+).